The chain runs to 408 residues: Broad specificity amino-acid racemase (408 aa).

An N-terminal signal peptide occupies residues 1–24; that stretch reads MNFKKTLLSIAIASASLTPAFSYS. The cysteines at positions 71 and 97 are disulfide-linked. The Proton acceptor role is filled by Lys-75. Lys-75 bears the N6-(pyridoxal phosphate)lysine mark. Position 174 (Arg-174) interacts with substrate. The active-site Proton acceptor is the Tyr-300. Met-348 lines the substrate pocket.

Belongs to the alanine racemase family. Bsr subfamily. Requires pyridoxal 5'-phosphate as cofactor.

It is found in the periplasm. It catalyses the reaction an L-alpha-amino acid = a D-alpha-amino acid. It carries out the reaction L-lysine = D-lysine. The enzyme catalyses L-arginine = D-arginine. Its function is as follows. Amino-acid racemase able to utilize a broad range of substrates. The polypeptide is Broad specificity amino-acid racemase (alr) (Vibrio vulnificus (strain CMCP6)).